The chain runs to 512 residues: Probable cytosol aminopeptidase (512 aa).

The Mn(2+) site is built by Lys284 and Asp289. Lys296 is a catalytic residue. Positions 307, 366, and 368 each coordinate Mn(2+). The active site involves Arg370.

This sequence belongs to the peptidase M17 family. The cofactor is Mn(2+).

It localises to the cytoplasm. It carries out the reaction Release of an N-terminal amino acid, Xaa-|-Yaa-, in which Xaa is preferably Leu, but may be other amino acids including Pro although not Arg or Lys, and Yaa may be Pro. Amino acid amides and methyl esters are also readily hydrolyzed, but rates on arylamides are exceedingly low.. The catalysed reaction is Release of an N-terminal amino acid, preferentially leucine, but not glutamic or aspartic acids.. Presumably involved in the processing and regular turnover of intracellular proteins. Catalyzes the removal of unsubstituted N-terminal amino acids from various peptides. This Cupriavidus necator (strain ATCC 17699 / DSM 428 / KCTC 22496 / NCIMB 10442 / H16 / Stanier 337) (Ralstonia eutropha) protein is Probable cytosol aminopeptidase.